A 1030-amino-acid polypeptide reads, in one-letter code: ADAMTS-like protein 4 (1030 aa).

The first 24 residues, 1-24, serve as a signal peptide directing secretion; the sequence is MELWLGRLWLYVMLLLLLLQLCQD. One can recognise a TSP type-1 1 domain in the interval 47–91; sequence GPWGRWASCSQPCGVGVQRRSRTCELHPALSLPPRPPRHPEAPQP. Disordered stretches follow at residues 73–150 and 168–306; these read HPAL…KPGM and LAHK…LPLT. Composition is skewed to polar residues over residues 176–186, 211–237, and 245–257; these read KDSSTAEETLP, QSRS…SSAP, and PTSS…SFQG. N-linked (GlcNAc...) asparagine glycosylation is found at Asn451 and Asn731. 5 TSP type-1 domains span residues 681–740, 741–800, 803–865, 866–925, and 926–982; these read CPPY…QLRL, CGHW…GPCT, WFYS…GPCE, KTWR…QGQA, and CEDQ…QPCN. One can recognise a PLAC domain in the interval 985–1022; that stretch reads PDDQCKDSSPHCPLVVQARLCVYPYYTATCCRSCAHVL.

In terms of assembly, interacts with CTSB. Interacts with FBN1. Glycosylated. Can be O-fucosylated by POFUT2 on a serine or a threonine residue found within the consensus sequence C1-X(2)-(S/T)-C2-G of the TSP type-1 repeat domains where C1 and C2 are the first and second cysteine residue of the repeat, respectively. Fucosylated repeats can then be further glycosylated by the addition of a beta-1,3-glucose residue by the glucosyltransferase, B3GALTL. Fucosylation mediates the efficient secretion of ADAMTS family members. Can also be C-glycosylated with one or two mannose molecules on tryptophan residues within the consensus sequence W-X-X-W of the TPRs, and N-glycosylated. These other glycosylations can also facilitate secretion.

The protein localises to the secreted. Its subcellular location is the extracellular space. It localises to the extracellular matrix. Its function is as follows. Positive regulation of apoptosis. May facilitate FBN1 microfibril biogenesis. The sequence is that of ADAMTS-like protein 4 from Rattus norvegicus (Rat).